An 84-amino-acid chain; its full sequence is Small ribosomal subunit protein uS15 (84 aa).

It belongs to the universal ribosomal protein uS15 family. Part of the 30S ribosomal subunit. Forms a bridge to the 50S subunit in the 70S ribosome, contacting the 23S rRNA.

In terms of biological role, one of the primary rRNA binding proteins, it binds directly to 16S rRNA where it helps nucleate assembly of the platform of the 30S subunit by binding and bridging several RNA helices of the 16S rRNA. Its function is as follows. Forms an intersubunit bridge (bridge B4) with the 23S rRNA of the 50S subunit in the ribosome. This chain is Small ribosomal subunit protein uS15, found in Thermosipho melanesiensis (strain DSM 12029 / CIP 104789 / BI429).